Reading from the N-terminus, the 205-residue chain is Recombination protein RecR (205 aa).

The C4-type zinc-finger motif lies at 64–79 (CSRCYFITQNDLCAIC). Positions 87–182 (RIVCVVEEPL…RVTRLARGLP (96 aa)) constitute a Toprim domain.

Belongs to the RecR family.

Functionally, may play a role in DNA repair. It seems to be involved in an RecBC-independent recombinational process of DNA repair. It may act with RecF and RecO. The polypeptide is Recombination protein RecR (Roseiflexus castenholzii (strain DSM 13941 / HLO8)).